The chain runs to 237 residues: MPRPGKDSYDEQKPPYSYIWLTYMAIQDSDDKMLPLTEIYKYIMDRFPFYRKNTQRWQNSLRHNLSFNDCFIKIPRRADRPGKGSYWAVHPNASGMFENGSCLRRRKRFRARGGQDDDDDDFHHPAPSKISRKNPLPLLPEPPITPPLLSSLFPNLPPSLPNFCLFPPGMDPTKSLLLNPLSLLLMPHFLKNSSNFESSTPHSETSEISGSGSSSSKTPTPEAGFNSSFSIESILSS.

Residues 12–103 (QKPPYSYIWL…SGMFENGSCL (92 aa)) constitute a DNA-binding region (fork-head). 2 disordered regions span residues 110-141 (RARGGQDDDDDDFHHPAPSKISRKNPLPLLPE) and 195-237 (NFES…ILSS). 2 stretches are compositionally biased toward low complexity: residues 206–216 (SEISGSGSSSS) and 227–237 (SSFSIESILSS).

Its subcellular location is the nucleus. Lin-31 regulates how vulval precursor cells choose their fate. It helps specify three alternative cell fates in vulval development. This is Protein lin-31 (lin-31) from Caenorhabditis elegans.